Here is a 147-residue protein sequence, read N- to C-terminus: Phospholipase A2 inhibitor subunit B (147 aa).

The C-type lectin domain occupies 62–143; that stretch reads EICEEAGGHI…DEKLLVVCEF (82 aa). Cystine bridges form between cysteine 64/cysteine 141 and cysteine 119/cysteine 133. N-linked (GlcNAc...) asparagine glycosylation is present at asparagine 103.

It belongs to the alpha-type phospholipase A2 inhibitor family. In terms of assembly, homo- or heterotrimer; homotrimer of PLI-A chains, two PLI-A and one PLI-B chains, one PLI-A and two PLI-B chains, and homotrimer of PLI-B chains (with a ratio of 1:3:3:1). In terms of tissue distribution, expressed by the liver.

Its subcellular location is the secreted. Its function is as follows. PLI binds directly phospholipase A2 in the presence or absence of calcium. Inhibitory activity of the PLI-B homotrimer is less specific than that of the PLI-A homotrimer. The polypeptide is Phospholipase A2 inhibitor subunit B (Protobothrops flavoviridis (Habu)).